A 474-amino-acid polypeptide reads, in one-letter code: ATP synthase subunit beta (474 aa).

Position 153–160 (153–160 (GGAGVGKT)) interacts with ATP.

The protein belongs to the ATPase alpha/beta chains family. As to quaternary structure, F-type ATPases have 2 components, CF(1) - the catalytic core - and CF(0) - the membrane proton channel. CF(1) has five subunits: alpha(3), beta(3), gamma(1), delta(1), epsilon(1). CF(0) has three main subunits: a(1), b(2) and c(9-12). The alpha and beta chains form an alternating ring which encloses part of the gamma chain. CF(1) is attached to CF(0) by a central stalk formed by the gamma and epsilon chains, while a peripheral stalk is formed by the delta and b chains.

The protein localises to the cell inner membrane. The enzyme catalyses ATP + H2O + 4 H(+)(in) = ADP + phosphate + 5 H(+)(out). Functionally, produces ATP from ADP in the presence of a proton gradient across the membrane. The catalytic sites are hosted primarily by the beta subunits. In Rickettsia prowazekii (strain Madrid E), this protein is ATP synthase subunit beta.